We begin with the raw amino-acid sequence, 291 residues long: Homoserine kinase (291 aa).

Position 79-89 (79-89 (PLARGLGSSSA)) interacts with ATP.

The protein belongs to the GHMP kinase family. Homoserine kinase subfamily.

It is found in the cytoplasm. It catalyses the reaction L-homoserine + ATP = O-phospho-L-homoserine + ADP + H(+). Its pathway is amino-acid biosynthesis; L-threonine biosynthesis; L-threonine from L-aspartate: step 4/5. Functionally, catalyzes the ATP-dependent phosphorylation of L-homoserine to L-homoserine phosphate. This chain is Homoserine kinase, found in Leuconostoc citreum (strain KM20).